The sequence spans 871 residues: Protein pob1 (871 aa).

The SH3 domain occupies 2–65; sequence ASQRFVIALH…PASHVELISD (64 aa). Positions 42–168 are disordered; that stretch reads WWEGEDEQGN…PSSDLSNFNT (127 aa). A compositionally biased stretch (basic and acidic residues) spans 62–80; the sequence is LISDERSDSSDSRRGKEDF. 2 stretches are compositionally biased toward low complexity: residues 88–100 and 109–124; these read TRSSLSSSRSTSS and LYSNNSLSSSHSSILN. A compositionally biased stretch (polar residues) spans 131 to 168; that stretch reads SKPSVPSNFNSMFPSSKQEGPSPLLDNQPSSDLSNFNT. 2 positions are modified to phosphoserine: S224 and S225. A Phosphotyrosine modification is found at Y229. S241 bears the Phosphoserine mark. One can recognise an SAM domain in the interval 250-313; sequence WSTEEVVEWL…LRKIQQLKDS (64 aa). The span at 329 to 343 shows a compositional bias: low complexity; sequence ISVSQSSDSSSSIPK. 2 disordered regions span residues 329–371 and 384–670; these read ISVS…NRPT and PDLD…KSKR. Composition is skewed to polar residues over residues 384–395 and 404–451; these read PDLDSSPSTDWN and TPSS…NSGL. A phosphoserine mark is found at S433, S439, and S440. At T442 the chain carries Phosphothreonine. S444 carries the phosphoserine modification. The segment covering 456–467 has biased composition (low complexity); the sequence is TEPISSPSTSSI. Residues 492–511 show a composition bias toward polar residues; the sequence is QPSSNVPTKFTGGASESSSV. Residue S549 is modified to Phosphoserine. Residues 549-560 are compositionally biased toward low complexity; it reads SPSSISSRLPSS. Polar residues-rich tracts occupy residues 561–574 and 583–606; these read NLEQGSSSSVTKSP and KASSPVTSKGVSINEKSAVNNYAT. Residues 698 to 808 form the PH domain; the sequence is TADCHGWMRK…WSSAFLKATV (111 aa).

It localises to the cytoplasm. Its subcellular location is the membrane. Its function is as follows. Has a role in cell elongation and separation. This is Protein pob1 (pob1) from Schizosaccharomyces pombe (strain 972 / ATCC 24843) (Fission yeast).